The following is a 144-amino-acid chain: Large-conductance mechanosensitive channel (144 aa).

The next 2 membrane-spanning stretches (helical) occupy residues 16–36 and 86–106; these read VIDL…VDSV and GNFL…FLMV.

This sequence belongs to the MscL family. As to quaternary structure, homopentamer.

It is found in the cell inner membrane. Channel that opens in response to stretch forces in the membrane lipid bilayer. May participate in the regulation of osmotic pressure changes within the cell. This chain is Large-conductance mechanosensitive channel, found in Cupriavidus pinatubonensis (strain JMP 134 / LMG 1197) (Cupriavidus necator (strain JMP 134)).